Consider the following 223-residue polypeptide: MVKFAVVVFPGTNCDFETERAIRKAGAEAERVWYKTSLKDFDGVVLPGGFSYADYLRAGAIAARQEIIEEVKEFARDGKPVLGICNGFQVLTEAGLLPGALRPNKVPRFICRWVHLRVADTETPFTQFYEPGEVIRMPIAHAEGNYYADDPSKVRIAFQYSDEEGNITEEANPNGSLLNIAAIANENGNVLGTMPHPERASDRFLGSEDGLKLFRSMVEWARK.

Positions 4-223 (FAVVVFPGTN…FRSMVEWARK (220 aa)) constitute a Glutamine amidotransferase type-1 domain. The Nucleophile role is filled by Cys85. Residues His196 and Glu198 contribute to the active site.

In terms of assembly, part of the FGAM synthase complex composed of 1 PurL, 1 PurQ and 2 PurS subunits.

It is found in the cytoplasm. It carries out the reaction N(2)-formyl-N(1)-(5-phospho-beta-D-ribosyl)glycinamide + L-glutamine + ATP + H2O = 2-formamido-N(1)-(5-O-phospho-beta-D-ribosyl)acetamidine + L-glutamate + ADP + phosphate + H(+). The catalysed reaction is L-glutamine + H2O = L-glutamate + NH4(+). Its pathway is purine metabolism; IMP biosynthesis via de novo pathway; 5-amino-1-(5-phospho-D-ribosyl)imidazole from N(2)-formyl-N(1)-(5-phospho-D-ribosyl)glycinamide: step 1/2. Part of the phosphoribosylformylglycinamidine synthase complex involved in the purines biosynthetic pathway. Catalyzes the ATP-dependent conversion of formylglycinamide ribonucleotide (FGAR) and glutamine to yield formylglycinamidine ribonucleotide (FGAM) and glutamate. The FGAM synthase complex is composed of three subunits. PurQ produces an ammonia molecule by converting glutamine to glutamate. PurL transfers the ammonia molecule to FGAR to form FGAM in an ATP-dependent manner. PurS interacts with PurQ and PurL and is thought to assist in the transfer of the ammonia molecule from PurQ to PurL. The protein is Phosphoribosylformylglycinamidine synthase subunit PurQ of Thermococcus kodakarensis (strain ATCC BAA-918 / JCM 12380 / KOD1) (Pyrococcus kodakaraensis (strain KOD1)).